Reading from the N-terminus, the 316-residue chain is N-acetylmuramic acid 6-phosphate etherase (316 aa).

Positions 66–229 (IVAAIGRGGR…STASMIRLGK (164 aa)) constitute an SIS domain. The active-site Proton donor is Glu-94. The active site involves Glu-125.

It belongs to the GCKR-like family. MurNAc-6-P etherase subfamily. Homodimer.

The catalysed reaction is N-acetyl-D-muramate 6-phosphate + H2O = N-acetyl-D-glucosamine 6-phosphate + (R)-lactate. It functions in the pathway amino-sugar metabolism; 1,6-anhydro-N-acetylmuramate degradation. Its pathway is amino-sugar metabolism; N-acetylmuramate degradation. It participates in cell wall biogenesis; peptidoglycan recycling. In terms of biological role, specifically catalyzes the cleavage of the D-lactyl ether substituent of MurNAc 6-phosphate, producing GlcNAc 6-phosphate and D-lactate. Together with AnmK, is also required for the utilization of anhydro-N-acetylmuramic acid (anhMurNAc) either imported from the medium or derived from its own cell wall murein, and thus plays a role in cell wall recycling. The polypeptide is N-acetylmuramic acid 6-phosphate etherase (Jannaschia sp. (strain CCS1)).